The chain runs to 223 residues: Transcriptional regulatory protein PhoP (223 aa).

Positions 2–116 (RVLVVEDNAL…EVMARMQALM (115 aa)) constitute a Response regulatory domain. A 4-aspartylphosphate modification is found at Asp-51. The ompR/PhoB-type DNA-binding region spans 124–222 (SQVISLPPFQ…VRGQGYLFEL (99 aa)).

Phosphorylated by PhoQ.

The protein resides in the cytoplasm. Functionally, member of the two-component regulatory system PhoQ/PhoP involved in virulence, adaptation to low Mg(2+) environments and the control of acid resistance genes. This chain is Transcriptional regulatory protein PhoP (phoP), found in Escherichia coli O157:H7.